A 412-amino-acid chain; its full sequence is Multifunctional CCA protein (412 aa).

ATP-binding residues include G8 and R11. CTP-binding residues include G8 and R11. Residues D21 and D23 each coordinate Mg(2+). Positions 91, 137, and 140 each coordinate ATP. Residues R91, R137, and R140 each coordinate CTP. One can recognise an HD domain in the interval 226–327 (TGIHTMMVID…VTLFEKTDAL (102 aa)).

It belongs to the tRNA nucleotidyltransferase/poly(A) polymerase family. Bacterial CCA-adding enzyme type 1 subfamily. As to quaternary structure, monomer. Can also form homodimers and oligomers. Mg(2+) is required as a cofactor. The cofactor is Ni(2+).

The enzyme catalyses a tRNA precursor + 2 CTP + ATP = a tRNA with a 3' CCA end + 3 diphosphate. The catalysed reaction is a tRNA with a 3' CCA end + 2 CTP + ATP = a tRNA with a 3' CCACCA end + 3 diphosphate. Catalyzes the addition and repair of the essential 3'-terminal CCA sequence in tRNAs without using a nucleic acid template. Adds these three nucleotides in the order of C, C, and A to the tRNA nucleotide-73, using CTP and ATP as substrates and producing inorganic pyrophosphate. tRNA 3'-terminal CCA addition is required both for tRNA processing and repair. Also involved in tRNA surveillance by mediating tandem CCA addition to generate a CCACCA at the 3' terminus of unstable tRNAs. While stable tRNAs receive only 3'-terminal CCA, unstable tRNAs are marked with CCACCA and rapidly degraded. This chain is Multifunctional CCA protein, found in Dechloromonas aromatica (strain RCB).